A 591-amino-acid polypeptide reads, in one-letter code: L-fucose isomerase (591 aa).

Active-site proton acceptor residues include E337 and D361. Positions 337, 361, and 528 each coordinate Mn(2+).

Belongs to the L-fucose isomerase family. In terms of assembly, homohexamer. It depends on Mn(2+) as a cofactor.

Its subcellular location is the cytoplasm. It carries out the reaction L-fucose = L-fuculose. It participates in carbohydrate degradation; L-fucose degradation; L-lactaldehyde and glycerone phosphate from L-fucose: step 1/3. In terms of biological role, converts the aldose L-fucose into the corresponding ketose L-fuculose. In Salmonella typhi, this protein is L-fucose isomerase.